We begin with the raw amino-acid sequence, 425 residues long: MPYVDRQNRICGFLDIEDNENSGKFLRRYFILDTQANCLLWYMDNPQNLAVGAGAVGSLQLTYISKVSIATPKQKPKTPFCFVINALSQRYFLQANDQKDLKDWVEALNQASKITVPKAGTVPLATEVLKNLTAPPTLEKKPQVAYKTEIIGGVVVQTPISQNGGDGQEGCEPGTHAFLRRSQSYIPTSGCRPSTGPPLIKSGYCVKQGNVRKSWKRRFFALDDFTICYFKCEQDREPLRTIPLKDVLKTHECLVKSGDLLMRDNLFEIITTSRTFYVQADSPEDMHSWIEGIGAAVQALKCHPREPSFSRSISLTRPGSSTLTSAPNSILSRRRPPAEEKRGLCKAPSVASSWQPWTPVPQAEEKPLSVEHAPEDSLFMPNPGESTATGVLASSRVRHRSEPQHPKEKPFVFNLDDENIRTSDV.

Residues 7 to 113 (QNRICGFLDI…WVEALNQASK (107 aa)) enclose the PH 1 domain. Lys141 participates in a covalent cross-link: Glycyl lysine isopeptide (Lys-Gly) (interchain with G-Cter in SUMO2). Residue Ser184 is modified to Phosphoserine. The 101-residue stretch at 198-298 (PLIKSGYCVK…WIEGIGAAVQ (101 aa)) folds into the PH 2 domain. Residues 310–331 (SRSISLTRPGSSTLTSAPNSIL) are compositionally biased toward polar residues. The tract at residues 310–425 (SRSISLTRPG…DDENIRTSDV (116 aa)) is disordered. Residues Ser314 and Ser349 each carry the phosphoserine modification. Composition is skewed to basic and acidic residues over residues 363 to 375 (AEEKPLSVEHAPE) and 400 to 410 (RSEPQHPKEKP).

Binds MPDZ and PTPN13.

The protein resides in the cytoplasm. It is found in the cell membrane. The protein localises to the nucleus. Its function is as follows. Binds specifically to phosphatidylinositol 3,4-diphosphate (PtdIns3,4P2), but not to other phosphoinositides. May recruit other proteins to the plasma membrane. The protein is Pleckstrin homology domain-containing family A member 2 (Plekha2) of Mus musculus (Mouse).